A 683-amino-acid polypeptide reads, in one-letter code: Probable metal-nicotianamine transporter YSL3 (683 aa).

14 helical membrane passes run 29-49 (LVTP…CFVG), 58-78 (IVPA…KWLI), 97-117 (MFLL…GFAT), 142-162 (HVPI…GVLI), 204-224 (VATI…QWFY), 265-285 (IVNF…YPFL), 309-329 (VFIS…TLIT), 372-392 (IPIP…TIAI), 404-424 (LAVL…ATGL), 448-468 (PGAV…LHIS), 490-510 (TGQI…FLAF), 553-573 (CMTF…VVLV), 595-615 (FFAG…LLAW), and 628-648 (SAVA…SALL).

The protein belongs to the YSL (TC 2.A.67.2) family.

Its subcellular location is the membrane. Functionally, may be involved in the transport of nicotianamine-chelated metals. This Oryza sativa subsp. japonica (Rice) protein is Probable metal-nicotianamine transporter YSL3 (YSL3).